A 211-amino-acid chain; its full sequence is Adenylate kinase (211 aa).

10 to 15 (GSGKGT) contributes to the ATP binding site. Residues 30–59 (STGDLFRENILNSTALGQEIKKIVERGELV) are NMP. AMP contacts are provided by residues T31, R36, 57–59 (ELV), 85–88 (GFPR), and Q92. An LID region spans residues 121-158 (GRRICKSCNNIFNIYTLTTKKNGICDVCGGDLYQREDD). R122 is a binding site for ATP. Zn(2+) contacts are provided by C125 and C128. Residue 131–132 (IF) coordinates ATP. Zn(2+) contacts are provided by C145 and C148. 2 residues coordinate AMP: R155 and R166. Residue V194 participates in ATP binding.

The protein belongs to the adenylate kinase family. Monomer.

Its subcellular location is the cytoplasm. The enzyme catalyses AMP + ATP = 2 ADP. Its pathway is purine metabolism; AMP biosynthesis via salvage pathway; AMP from ADP: step 1/1. In terms of biological role, catalyzes the reversible transfer of the terminal phosphate group between ATP and AMP. Plays an important role in cellular energy homeostasis and in adenine nucleotide metabolism. The protein is Adenylate kinase of Borreliella burgdorferi (strain ATCC 35210 / DSM 4680 / CIP 102532 / B31) (Borrelia burgdorferi).